A 409-amino-acid chain; its full sequence is Peptidase T (409 aa).

His78 lines the Zn(2+) pocket. Asp80 is a catalytic residue. A Zn(2+)-binding site is contributed by Asp140. Glu174 acts as the Proton acceptor in catalysis. Zn(2+) is bound by residues Glu175, Asp197, and His379.

Belongs to the peptidase M20B family. The cofactor is Zn(2+).

The protein resides in the cytoplasm. The catalysed reaction is Release of the N-terminal residue from a tripeptide.. Its function is as follows. Cleaves the N-terminal amino acid of tripeptides. In Vibrio parahaemolyticus serotype O3:K6 (strain RIMD 2210633), this protein is Peptidase T.